The primary structure comprises 81 residues: Photosystem I iron-sulfur center (81 aa).

4Fe-4S ferredoxin-type domains lie at serine 2–tryptophan 31 and isoleucine 39–tyrosine 68. [4Fe-4S] cluster-binding residues include cysteine 11, cysteine 14, cysteine 17, cysteine 21, cysteine 48, cysteine 51, cysteine 54, and cysteine 58.

The eukaryotic PSI reaction center is composed of at least 11 subunits. [4Fe-4S] cluster serves as cofactor.

It localises to the plastid. It is found in the chloroplast thylakoid membrane. The enzyme catalyses reduced [plastocyanin] + hnu + oxidized [2Fe-2S]-[ferredoxin] = oxidized [plastocyanin] + reduced [2Fe-2S]-[ferredoxin]. Functionally, apoprotein for the two 4Fe-4S centers FA and FB of photosystem I (PSI); essential for photochemical activity. FB is the terminal electron acceptor of PSI, donating electrons to ferredoxin. The C-terminus interacts with PsaA/B/D and helps assemble the protein into the PSI complex. Required for binding of PsaD and PsaE to PSI. PSI is a plastocyanin/cytochrome c6-ferredoxin oxidoreductase, converting photonic excitation into a charge separation, which transfers an electron from the donor P700 chlorophyll pair to the spectroscopically characterized acceptors A0, A1, FX, FA and FB in turn. The sequence is that of Photosystem I iron-sulfur center from Rhodomonas salina (Cryptomonas salina).